Consider the following 437-residue polypeptide: ATP-dependent protease ATPase subunit HslU (437 aa).

Residues I18, 60-65 (GVGKTE), D250, E315, and R387 contribute to the ATP site.

Belongs to the ClpX chaperone family. HslU subfamily. In terms of assembly, a double ring-shaped homohexamer of HslV is capped on each side by a ring-shaped HslU homohexamer. The assembly of the HslU/HslV complex is dependent on binding of ATP.

Its subcellular location is the cytoplasm. ATPase subunit of a proteasome-like degradation complex; this subunit has chaperone activity. The binding of ATP and its subsequent hydrolysis by HslU are essential for unfolding of protein substrates subsequently hydrolyzed by HslV. HslU recognizes the N-terminal part of its protein substrates and unfolds these before they are guided to HslV for hydrolysis. The chain is ATP-dependent protease ATPase subunit HslU from Dinoroseobacter shibae (strain DSM 16493 / NCIMB 14021 / DFL 12).